Here is a 241-residue protein sequence, read N- to C-terminus: Uridylate kinase (241 aa).

ATP is bound at residue 15–18 (KLSG). An involved in allosteric activation by GTP region spans residues 23–28 (GAEGFG). Residue G57 coordinates UMP. ATP contacts are provided by G58 and R62. Residues D77 and 138–145 (TGNPFFTT) contribute to the UMP site. Residues T165, Y171, and D174 each coordinate ATP.

This sequence belongs to the UMP kinase family. Homohexamer.

Its subcellular location is the cytoplasm. It carries out the reaction UMP + ATP = UDP + ADP. It participates in pyrimidine metabolism; CTP biosynthesis via de novo pathway; UDP from UMP (UMPK route): step 1/1. With respect to regulation, allosterically activated by GTP. Inhibited by UTP. Functionally, catalyzes the reversible phosphorylation of UMP to UDP. The chain is Uridylate kinase from Serratia proteamaculans (strain 568).